Reading from the N-terminus, the 118-residue chain is UPF0102 protein NE0711 (118 aa).

This sequence belongs to the UPF0102 family.

This Nitrosomonas europaea (strain ATCC 19718 / CIP 103999 / KCTC 2705 / NBRC 14298) protein is UPF0102 protein NE0711.